Reading from the N-terminus, the 50-residue chain is Protein PsbN (50 aa).

A helical membrane pass occupies residues 14–34 (VAVTILAILLALTGFGLWTAF).

This sequence belongs to the PsbN family.

It localises to the cellular thylakoid membrane. In terms of biological role, may play a role in photosystem I and II biogenesis. The polypeptide is Protein PsbN (Prochlorococcus marinus (strain MIT 9312)).